We begin with the raw amino-acid sequence, 139 residues long: Nucleoside diphosphate kinase (139 aa).

6 residues coordinate ATP: Lys10, Phe58, Arg86, Thr92, Arg103, and Asn113. His116 acts as the Pros-phosphohistidine intermediate in catalysis.

It belongs to the NDK family. As to quaternary structure, homotetramer. The cofactor is Mg(2+).

The protein resides in the cytoplasm. The enzyme catalyses a 2'-deoxyribonucleoside 5'-diphosphate + ATP = a 2'-deoxyribonucleoside 5'-triphosphate + ADP. It catalyses the reaction a ribonucleoside 5'-diphosphate + ATP = a ribonucleoside 5'-triphosphate + ADP. In terms of biological role, major role in the synthesis of nucleoside triphosphates other than ATP. The ATP gamma phosphate is transferred to the NDP beta phosphate via a ping-pong mechanism, using a phosphorylated active-site intermediate. The protein is Nucleoside diphosphate kinase of Nitratidesulfovibrio vulgaris (strain DSM 19637 / Miyazaki F) (Desulfovibrio vulgaris).